The sequence spans 506 residues: Epstein-Barr nuclear antigen leader protein (506 aa).

2 disordered regions span residues 1 to 470 and 485 to 506; these read MGDR…PRPP and FEPP…EDED. S35 bears the Phosphoserine; by host mark.

The protein belongs to the lymphocryptovirus EBNA-LP family. As to quaternary structure, homooligomer. Interacts with host SP100; this interaction is important for EBNA-LP coactivator activity. Interacts with host HAX1, ERR1 and HSPA2. Interacts with host PRKDC and AKAP8L; these interactions modulate the coactivator function of EBNA-LP. Post-translationally, phosphorylated by the cellular protein kinase cdc2.

Its subcellular location is the host nucleus. In terms of biological role, plays an important role in the establishment of B-cell immortalization by acting as an EBNA2 coactivator. This transcriptional activation preferentially enhances the expression of the major viral protein LMP1. The interaction between EBNA-LP and host SP100 correlates with coactivation of EBNA2 and the relocalization of SP100 from PML nuclear bodies into nucleoplasm. This Epstein-Barr virus (strain B95-8) (HHV-4) protein is Epstein-Barr nuclear antigen leader protein (EBNA-LP).